The following is a 2567-amino-acid chain: Unconventional myosin-XVIIIb (2567 aa).

A disordered region spans residues leucine 41 to aspartate 508. Positions glycine 44–glutamine 54 are enriched in basic and acidic residues. The span at serine 71–isoleucine 104 shows a compositional bias: low complexity. 2 stretches are compositionally biased toward basic and acidic residues: residues leucine 105–aspartate 116 and leucine 160–proline 176. Polar residues predominate over residues serine 196 to threonine 206. Basic and acidic residues-rich tracts occupy residues threonine 251 to glycine 265, arginine 278 to alanine 287, and serine 326 to glycine 349. Residues glutamate 350–glutamine 362 are compositionally biased toward polar residues. Basic and acidic residues-rich tracts occupy residues aspartate 367–glutamate 377, serine 410–lysine 420, leucine 471–glutamine 485, and glutamate 492–aspartate 508. In terms of domain architecture, Myosin motor spans aspartate 571 to glutamate 1333. ATP is bound at residue glycine 660–threonine 667. The interval valine 1208 to proline 1232 is disordered. The GPA stretch occupies residues glycine 1213–leucine 1240. At serine 1216 the chain carries Phosphoserine. An IQ domain is found at valine 1336 to alanine 1365. 3 coiled-coil regions span residues serine 1396–glycine 1783, lysine 1825–aspartate 1961, and glutamate 2014–serine 2090. The segment at asparagine 1426–alanine 2083 is tail. Serine 1829 carries the phosphoserine modification. The segment covering threonine 2139–isoleucine 2153 has biased composition (polar residues). 2 disordered regions span residues threonine 2139–proline 2194 and serine 2217–alanine 2249. Residues isoleucine 2158–arginine 2167 show a composition bias toward basic and acidic residues. Polar residues predominate over residues threonine 2168 to lysine 2185. A Phosphoserine modification is found at serine 2193. Polar residues predominate over residues proline 2227–leucine 2238. Phosphoserine occurs at positions 2296 and 2309. Positions serine 2357–leucine 2376 are disordered. Serine 2377 carries the post-translational modification Phosphoserine. Disordered stretches follow at residues phenylalanine 2444 to serine 2471 and lysine 2494 to lysine 2567. The span at lysine 2494–histidine 2504 shows a compositional bias: basic and acidic residues. Residues serine 2506 to serine 2520 show a composition bias toward low complexity. The segment covering glycine 2537–aspartate 2556 has biased composition (basic and acidic residues).

It belongs to the TRAFAC class myosin-kinesin ATPase superfamily. Myosin family. Homodimer. May interact with F actin through the GPA motif (Gly/Pro/Ala-rich). Selectively expressed in cardiac and skeletal muscles. Weakly expressed in testis, pancreas, placenta, prostate, lung and thymus.

It localises to the cytoplasm. The protein resides in the nucleus. The protein localises to the myofibril. Its subcellular location is the sarcomere. May be involved in intracellular trafficking of the muscle cell when in the cytoplasm, whereas entering the nucleus, may be involved in the regulation of muscle specific genes. May play a role in the control of tumor development and progression; restored MYO18B expression in lung cancer cells suppresses anchorage-independent growth. This Homo sapiens (Human) protein is Unconventional myosin-XVIIIb (MYO18B).